The following is a 416-amino-acid chain: F-box/FBD/LRR-repeat protein At1g13570 (416 aa).

An F-box domain is found at 5–53; that stretch reads PDFISDLPQSIIENILTRLSIRDAIRTSVLSSKWRYKWSTLTDLVFDEK. 5 LRR repeats span residues 115-142, 164-189, 203-229, 238-263, and 294-321; these read VLKL…ELCH, QILV…SLSY, MYLY…SVSM, FEQS…VGYI, and CFED…KVSA. Positions 346-384 constitute an FBD domain; sequence LPSLESVKITDASGIRYELEFIRFLLGTSPVLETVTVSS.

The protein is F-box/FBD/LRR-repeat protein At1g13570 of Arabidopsis thaliana (Mouse-ear cress).